We begin with the raw amino-acid sequence, 325 residues long: Malate dehydrogenase (325 aa).

An NAD(+)-binding site is contributed by 11 to 17 (GAAGQIA). Substrate contacts are provided by R92 and R98. NAD(+)-binding positions include N105, Q112, and 129-131 (VGN). Positions 131 and 162 each coordinate substrate. H187 (proton acceptor) is an active-site residue.

The protein belongs to the LDH/MDH superfamily. MDH type 2 family.

It carries out the reaction (S)-malate + NAD(+) = oxaloacetate + NADH + H(+). In terms of biological role, catalyzes the reversible oxidation of malate to oxaloacetate. This chain is Malate dehydrogenase, found in Methylococcus capsulatus (strain ATCC 33009 / NCIMB 11132 / Bath).